Reading from the N-terminus, the 39-residue chain is Photosystem II reaction center protein Psb30 (39 aa).

Residues 12–32 form a helical membrane-spanning segment; sequence IFQLTFVGLIMVAGPVVIFLL.

The protein belongs to the Psb30/Ycf12 family. PSII is composed of 1 copy each of membrane proteins PsbA, PsbB, PsbC, PsbD, PsbE, PsbF, PsbH, PsbI, PsbJ, PsbK, PsbL, PsbM, PsbT, PsbX, PsbY, PsbZ, Psb30/Ycf12, peripheral proteins PsbO, CyanoQ (PsbQ), PsbU, PsbV and a large number of cofactors. It forms dimeric complexes.

It is found in the cellular thylakoid membrane. Functionally, a core subunit of photosystem II (PSII), probably helps stabilize the reaction center. The sequence is that of Photosystem II reaction center protein Psb30 from Rippkaea orientalis (strain PCC 8801 / RF-1) (Cyanothece sp. (strain PCC 8801)).